A 737-amino-acid chain; its full sequence is Protein OPG064 (737 aa).

Met-1 bears the N-acetylmethionine; by host mark. Cysteines 496 and 535 form a disulfide.

Belongs to the orthopoxvirus OPG064 family. Interacts with host KLC2; this interaction promotes IEV trafficking by engaging the host kinesin-1 complex. Interacts with protein OPG056/F12. Post-translationally, N-acetylated on initiator methionine by host.

Its function is as follows. Plays a role in intracellular enveloped virus (IEV) transport to the cell surface on microtubules. Together with protein OPG056/F12, forms a complex that interacts with host KLC2 (kinesin light chain isoform 2) to engage the kinesin-1 complex and thereby promote IEV trafficking. This is Protein OPG064 (OPG064) from Bos taurus (Bovine).